The following is a 147-amino-acid chain: Heavy metal-associated isoprenylated plant protein 27 (147 aa).

One can recognise an HMA domain in the interval 18-82; that stretch reads FQKVEIKVKM…VMHRTGKKAE (65 aa). 2 residues coordinate a metal cation: C29 and C32. C144 is subject to Cysteine methyl ester. Residue C144 is the site of S-farnesyl cysteine attachment. The propeptide at 145-147 is removed in mature form; sequence TIM.

Belongs to the HIPP family. As to quaternary structure, interacts with UBP16. Interacts with ZHD11/HB29.

The protein localises to the membrane. Heavy-metal-binding protein. Binds cadmium. May be involved in cadmium transport and play a role in cadmium detoxification. The chain is Heavy metal-associated isoprenylated plant protein 27 from Arabidopsis thaliana (Mouse-ear cress).